The sequence spans 77 residues: Putative defensin-like protein 158 (77 aa).

Positions 1-24 (MANISWSHFLILMLVFSVVKKGKG) are cleaved as a signal peptide. Disulfide bonds link C31/C77, C41/C60, C46/C71, and C50/C73.

This sequence belongs to the DEFL family.

The protein localises to the secreted. This is Putative defensin-like protein 158 (LCR23) from Arabidopsis thaliana (Mouse-ear cress).